The sequence spans 813 residues: Ribosome-releasing factor 2, mitochondrial (813 aa).

Residues 1 to 20 constitute a mitochondrion transit peptide; sequence MLRIVWKPLKIRLPVWRRYQ. In terms of domain architecture, tr-type G spans 26-314; that stretch reads NSIRNVGIIA…AIIDYLPSPV (289 aa). GTP contacts are provided by residues 35–42, 99–103, and 153–156; these read AHIDAGKT, DTPGH, and NKMD.

This sequence belongs to the TRAFAC class translation factor GTPase superfamily. Classic translation factor GTPase family. EF-G/EF-2 subfamily.

The protein localises to the mitochondrion. Functionally, mitochondrial GTPase that mediates the disassembly of ribosomes from messenger RNA at the termination of mitochondrial protein biosynthesis. Not involved in the GTP-dependent ribosomal translocation step during translation elongation. The protein is Ribosome-releasing factor 2, mitochondrial (mef2) of Schizosaccharomyces pombe (strain 972 / ATCC 24843) (Fission yeast).